A 251-amino-acid polypeptide reads, in one-letter code: Uridylate kinase (251 aa).

Residue 19–22 (KLSG) participates in ATP binding. Residue G61 participates in UMP binding. 2 residues coordinate ATP: G62 and R66. Residues D81 and 142–149 (TGNPYFTT) contribute to the UMP site. T169, Y175, and D178 together coordinate ATP.

It belongs to the UMP kinase family. Homohexamer.

The protein resides in the cytoplasm. The catalysed reaction is UMP + ATP = UDP + ADP. It functions in the pathway pyrimidine metabolism; CTP biosynthesis via de novo pathway; UDP from UMP (UMPK route): step 1/1. Inhibited by UTP. Its function is as follows. Catalyzes the reversible phosphorylation of UMP to UDP. In Anaeromyxobacter dehalogenans (strain 2CP-C), this protein is Uridylate kinase.